The primary structure comprises 212 residues: Ribosomal RNA small subunit methyltransferase G (212 aa).

S-adenosyl-L-methionine is bound by residues Gly-80, Leu-85, 131–132 (AE), and Arg-146.

This sequence belongs to the methyltransferase superfamily. RNA methyltransferase RsmG family.

The protein localises to the cytoplasm. The catalysed reaction is guanosine(527) in 16S rRNA + S-adenosyl-L-methionine = N(7)-methylguanosine(527) in 16S rRNA + S-adenosyl-L-homocysteine. Specifically methylates the N7 position of guanine in position 527 of 16S rRNA. The polypeptide is Ribosomal RNA small subunit methyltransferase G (Xylella fastidiosa (strain M23)).